A 360-amino-acid chain; its full sequence is Protein Wnt-2 (360 aa).

The signal sequence occupies residues 1–25 (MNAPLGGIWLWLPLLLTWLTPEVNS). 11 cysteine pairs are disulfide-bonded: Cys76/Cys87, Cys127/Cys135, Cys137/Cys157, Cys206/Cys220, Cys208/Cys215, Cys278/Cys309, Cys294/Cys304, Cys308/Cys348, Cys324/Cys339, Cys326/Cys336, and Cys331/Cys332. Ser212 carries O-palmitoleoyl serine; by PORCN lipidation. A glycan (N-linked (GlcNAc...) asparagine) is linked at Asn295.

It belongs to the Wnt family. In terms of processing, palmitoleoylation is required for efficient binding to frizzled receptors. Depalmitoleoylation leads to Wnt signaling pathway inhibition. Expressed in brain in the thalamus, in fetal and adult lung and in placenta.

Its subcellular location is the secreted. It is found in the extracellular space. The protein resides in the extracellular matrix. Functionally, ligand for members of the frizzled family of seven transmembrane receptors. Functions in the canonical Wnt signaling pathway that results in activation of transcription factors of the TCF/LEF family. Functions as a upstream regulator of FGF10 expression. Plays an important role in embryonic lung development. May contribute to embryonic brain development by regulating the proliferation of dopaminergic precursors and neurons. This Homo sapiens (Human) protein is Protein Wnt-2 (WNT2).